A 669-amino-acid chain; its full sequence is Alpha-1,6-mannosylglycoprotein 6-beta-N-acetylglucosaminyltransferase (669 aa).

Topologically, residues 1–7 (MRRRHRC) are cytoplasmic. The helical; Signal-anchor for type II membrane protein transmembrane segment at 8 to 28 (VALLFIFSAFITPLGFFYYTI) threads the bilayer. The Lumenal portion of the chain corresponds to 29-669 (SNESKRYSEE…EQHAICKKCL (641 aa)). N-linked (GlcNAc...) asparagine glycosylation is found at asparagine 30, asparagine 412, asparagine 437, and asparagine 626.

The protein belongs to the glycosyltransferase 18 family. Expressed in a complex subset of neurons in larvae and in the spermathecal and pharyngeal-intestinal valves and certain vulval cells of adults.

The protein resides in the golgi apparatus membrane. The catalysed reaction is N(4)-{beta-D-GlcNAc-(1-&gt;2)-[beta-D-GlcNAc-(1-&gt;4)]-alpha-D-Man-(1-&gt;3)-[beta-D-GlcNAc-(1-&gt;2)-alpha-D-Man-(1-&gt;6)]-beta-D-Man-(1-&gt;4)-beta-D-GlcNAc-(1-&gt;4)-beta-D-GlcNAc}-L-asparaginyl-[protein] + UDP-N-acetyl-alpha-D-glucosamine = N(4)-{beta-D-GlcNAc-(1-&gt;2)-[beta-D-GlcNAc-(1-&gt;4)]-alpha-D-Man-(1-&gt;3)-[beta-D-GlcNAc-(1-&gt;2)-[beta-D-GlcNAc-(1-&gt;6)]-alpha-D-Man-(1-&gt;6)]-beta-D-Man-(1-&gt;4)-beta-D-GlcNAc-(1-&gt;4)-beta-D-GlcNAc}-L-asparaginyl-[protein] + UDP + H(+). Its pathway is protein modification; protein glycosylation. Catalyzes the addition of N-acetylglucosamine (GlcNAc) in beta 1-6 linkage to the alpha-linked mannose of biantennary N-linked oligosaccharides. The polypeptide is Alpha-1,6-mannosylglycoprotein 6-beta-N-acetylglucosaminyltransferase (gly-2) (Caenorhabditis elegans).